Reading from the N-terminus, the 647-residue chain is Phosphatidylinositol polyphosphate 5-phosphatase type IV (647 aa).

Disordered regions lie at residues 1–80 (MPSK…QPPI), 101–131 (RGSQEDLTVQNGASPCRGSLQDSVAQSPAYS), and 177–196 (HRDAASGGPPSRLASLHASH). Residues 52–55 (PMPP) form repeat 1. Residues 52–243 (PMPPFSIPAK…AHSNLGPSRP (192 aa)) form a 3 X 4 AA repeats of P-X-X-P region. The segment covering 60-75 (AKTSNQNPQTKANLIT) has biased composition (polar residues). The stretch at 76–79 (PQPP) is repeat 2. Ser103 is subject to Phosphoserine. Over residues 120-129 (LQDSVAQSPA) the composition is skewed to polar residues. The residue at position 197 (Thr197) is a Phosphothreonine. Repeat unit 3 spans residues 240 to 243 (PSRP). Phosphoserine is present on residues Ser245 and Ser259. The residue at position 644 (Cys644) is a Cysteine methyl ester. A lipid anchor (S-farnesyl cysteine) is attached at Cys644. Residues 645 to 647 (TVS) constitute a propeptide, removed in mature form.

Belongs to the inositol polyphosphate 5-phosphatase family. In terms of assembly, interacts (when prenylated) with PDE6D; this is important for normal location in cilia. Highly expressed in testis, in pachytene and diplotene spermatocytes, but not in more mature elongating spermatids. Detected in neurons throughout the brain.

It is found in the cytoplasm. Its subcellular location is the cytoskeleton. The protein resides in the cilium axoneme. It localises to the golgi apparatus. The protein localises to the golgi stack membrane. It is found in the cell projection. Its subcellular location is the ruffle. The protein resides in the cell membrane. It localises to the nucleus. The enzyme catalyses a 1,2-diacyl-sn-glycero-3-phospho-(1D-myo-inositol-4,5-bisphosphate) + H2O = a 1,2-diacyl-sn-glycero-3-phospho-(1D-myo-inositol 4-phosphate) + phosphate. It catalyses the reaction a 1,2-diacyl-sn-glycero-3-phospho-(1D-myo-inositol-3,4,5-trisphosphate) + H2O = a 1,2-diacyl-sn-glycero-3-phospho-(1D-myo-inositol-3,4-bisphosphate) + phosphate. It carries out the reaction a 1,2-diacyl-sn-glycero-3-phospho-(1D-myo-inositol-3,5-bisphosphate) + H2O = a 1,2-diacyl-sn-glycero-3-phospho-(1D-myo-inositol-3-phosphate) + phosphate. Phosphatidylinositol (PtdIns) phosphatase that specifically hydrolyzes the 5-phosphate of phosphatidylinositol-3,4,5-trisphosphate (PtdIns(3,4,5)P3), phosphatidylinositol 4,5-bisphosphate (PtdIns(4,5)P2) and phosphatidylinositol 3,5-bisphosphate (PtdIns(3,5)P2). Specific for lipid substrates, inactive towards water soluble inositol phosphates. Specific for lipid substrates, inactive towards water soluble inositol phosphates. Plays an essential role in the primary cilium by controlling ciliary growth and phosphoinositide 3-kinase (PI3K) signaling and stability. The polypeptide is Phosphatidylinositol polyphosphate 5-phosphatase type IV (Inpp5e) (Mus musculus (Mouse)).